Here is a 328-residue protein sequence, read N- to C-terminus: tRNA dimethylallyltransferase (328 aa).

ATP is bound at residue 19–26 (GPTASGKT). 21-26 (TASGKT) is a substrate binding site. Interaction with substrate tRNA stretches follow at residues 50-53 (DSAL), 174-178 (QRIQR), and 257-262 (RCVGYR).

This sequence belongs to the IPP transferase family. In terms of assembly, monomer. It depends on Mg(2+) as a cofactor.

The catalysed reaction is adenosine(37) in tRNA + dimethylallyl diphosphate = N(6)-dimethylallyladenosine(37) in tRNA + diphosphate. Catalyzes the transfer of a dimethylallyl group onto the adenine at position 37 in tRNAs that read codons beginning with uridine, leading to the formation of N6-(dimethylallyl)adenosine (i(6)A). In Leptothrix cholodnii (strain ATCC 51168 / LMG 8142 / SP-6) (Leptothrix discophora (strain SP-6)), this protein is tRNA dimethylallyltransferase.